A 50-amino-acid polypeptide reads, in one-letter code: Small nuclear ribonucleoprotein Sm D2 (50 aa).

The tract at residues 1-36 (MSLLNKPKSEMTPEELQKREEEEFNTGPLSVXTQSX) is disordered. An N-acetylserine modification is found at Ser-2. Residues Lys-6 and Lys-8 each participate in a glycyl lysine isopeptide (Lys-Gly) (interchain with G-Cter in SUMO2) cross-link. The segment covering 7-21 (PKSEMTPEELQKREE) has biased composition (basic and acidic residues). Ser-9 bears the Phosphoserine mark. Thr-12 is subject to Phosphothreonine.

The protein belongs to the snRNP core protein family. In terms of assembly, core component of the spliceosomal U1, U2, U4 and U5 small nuclear ribonucleoproteins (snRNPs), the building blocks of the spliceosome. Most spliceosomal snRNPs contain a common set of Sm proteins, SNRPB, SNRPD1, SNRPD2, SNRPD3, SNRPE, SNRPF and SNRPG that assemble in a heptameric protein ring on the Sm site of the small nuclear RNA to form the core snRNP. Component of the U1 snRNP. The U1 snRNP is composed of the U1 snRNA and the 7 core Sm proteins SNRPB, SNRPD1, SNRPD2, SNRPD3, SNRPE, SNRPF and SNRPG, and at least three U1 snRNP-specific proteins SNRNP70/U1-70K, SNRPA/U1-A and SNRPC/U1-C. Component of the U4/U6-U5 tri-snRNP complex composed of the U4, U6 and U5 snRNAs and at least PRPF3, PRPF4, PRPF6, PRPF8, PRPF31, SNRNP200, TXNL4A, SNRNP40, SNRPB, SNRPD1, SNRPD2, SNRPD3, SNRPE, SNRPF, SNRPG, DDX23, CD2BP2, PPIH, SNU13, EFTUD2, SART1 and USP39, plus LSM2, LSM3, LSM4, LSM5, LSM6, LSM7 and LSM8. Component of the minor spliceosome, which splices U12-type introns. Part of the SMN-Sm complex that contains SMN1, GEMIN2/SIP1, DDX20/GEMIN3, GEMIN4, GEMIN5, GEMIN6, GEMIN7, GEMIN8, STRAP/UNRIP and the Sm proteins SNRPB, SNRPD1, SNRPD2, SNRPD3, SNRPE, SNRPF and SNRPG; catalyzes core snRNPs assembly. Forms a 6S pICln-Sm complex composed of CLNS1A/pICln, SNRPD1, SNRPD2, SNRPE, SNRPF and SNRPG; ring-like structure where CLNS1A/pICln mimics additional Sm proteins and which is unable to assemble into the core snRNP. Interacts with SMN1; the interaction is direct. Interacts with GEMIN2; the interaction is direct. Interacts with SNRPD1; the interaction is direct. Interacts with SNRPF; the interaction is direct.

Its subcellular location is the cytoplasm. The protein localises to the cytosol. The protein resides in the nucleus. Its function is as follows. Plays a role in pre-mRNA splicing as a core component of the spliceosomal U1, U2, U4 and U5 small nuclear ribonucleoproteins (snRNPs), the building blocks of the spliceosome. Component of both the pre-catalytic spliceosome B complex and activated spliceosome C complexes. As a component of the minor spliceosome, involved in the splicing of U12-type introns in pre-mRNAs. The polypeptide is Small nuclear ribonucleoprotein Sm D2 (SNRPD2) (Sus scrofa (Pig)).